A 644-amino-acid chain; its full sequence is MSYFLSYCKAHGGALLTGYQALRAEGFLCDVTLETEGSEFPAHRSLLACSSDYFRALFKSHTQESRARVIHLHVPSAAGLQRLLDFIYTAWLSLSMDTVEDTLEAASYLQVTEALGLCGRYLERQLAPENCCFAANVAARFGLAHTLDAAERCIVSHLQELLARGAGPAGLLELNPTSLRAVLGAPDVARVPEARLLGLALAWLRQEPTTERLAHCTELLERVRFGLVPADVLRRVYSGSGLVLPARVKGLIIQALNYHTTPSRQPLMQGEQTSIRSPQTRILLVGGRRAREVVIEEVAAPQRAARGQVAAPEPEEEEEELEEEEEEEEWELTQNVVAFDVYNHRWRSLTQLPTPLLGHSVCTAGNFLFVLGGESPSGSASSPLADDSRVVTAQVHRYDPRFHAWTEVPAMREARAHFWCGAVGERLLAVGGLGAGGEVLASVEMYDLRRDRWTAAGALPRALHGHAGAVGDRGVVYISGGKAGRGEGGASSLRDLYVLGPEEQVWSKKAPMGTARFGHHMAVLRGAVFAFLGRYEPFSEIERYDPGADQWTRLRPLPYDRFCYGLAVVEETALLLGGLKWRDSRQVPTRNVVGYDLDLDRWEDIGCALPWAWSGLRCAVLQLAEGGDDEREGEVGEALDLVLG.

The region spanning 29 to 96 (CDVTLETEGS…IYTAWLSLSM (68 aa)) is the BTB domain. Positions 131 to 238 (CCFAANVAAR…PADVLRRVYS (108 aa)) constitute a BACK domain. The tract at residues 304 to 329 (AARGQVAAPEPEEEEEELEEEEEEEE) is disordered. A compositionally biased stretch (acidic residues) spans 313–329 (EPEEEEEELEEEEEEEE). Kelch repeat units lie at residues 320–366 (ELEE…TAGN), 367–425 (FLFV…AVGE), 426–473 (RLLA…VGDR), 475–526 (VVYI…VLRG), 528–571 (VFAF…VVEE), and 573–623 (ALLL…VLQL).

The chain is Kelch-like protein 34 (KLHL34) from Homo sapiens (Human).